The following is a 402-amino-acid chain: Ferrochelatase, mitochondrial (402 aa).

A mitochondrion-targeting transit peptide spans 1–33; that stretch reads MAAAGRAARPLVAGGRQLRVPLRWRGQVAAAAP. Arg94, Tyr102, and Ser109 together coordinate protoporphyrin IX. Residue Cys175 coordinates [2Fe-2S] cluster. Active-site residues include His209 and Asp362. The [2Fe-2S] cluster site is built by Cys382, Cys385, and Cys390.

This sequence belongs to the ferrochelatase family. Homodimer. Homotetramer. It depends on [2Fe-2S] cluster as a cofactor.

It localises to the mitochondrion inner membrane. The enzyme catalyses heme b + 2 H(+) = protoporphyrin IX + Fe(2+). It participates in porphyrin-containing compound metabolism; protoheme biosynthesis; protoheme from protoporphyrin-IX: step 1/1. In terms of biological role, catalyzes the ferrous insertion into protoporphyrin IX. The protein is Ferrochelatase, mitochondrial of Gallus gallus (Chicken).